We begin with the raw amino-acid sequence, 365 residues long: UBX domain-containing protein 2B (365 aa).

The segment at 1 to 97 is disordered; it reads MADGGASPAQ…MSDDKENQRF (97 aa). Composition is skewed to basic and acidic residues over residues 50–63 and 73–95; these read DEAKRQSLRSDKPT and LKIDSFRSLRKPERSMSDDKENQ. One can recognise an SEP domain in the interval 175–240; that stretch reads DVQILLKLWR…MEDHQEQEYV (66 aa). A UBX domain is found at 286 to 363; it reads DSVPATKIQI…DILNTVILQQ (78 aa).

Belongs to the NSFL1C family.

The protein resides in the nucleus. The protein localises to the cytoplasm. It is found in the cytosol. Its subcellular location is the endoplasmic reticulum. It localises to the golgi apparatus. The protein resides in the cytoskeleton. The protein localises to the microtubule organizing center. It is found in the centrosome. Its function is as follows. Adapter protein required for Golgi and endoplasmic reticulum biogenesis. Involved in Golgi and endoplasmic reticulum maintenance during interphase and in their reassembly at the end of mitosis. Regulates the centrosomal levels of kinase AURKA/Aurora A during mitotic progression by promoting AURKA removal from centrosomes in prophase. Also, regulates spindle orientation during mitosis. The sequence is that of UBX domain-containing protein 2B (UBXN2B) from Gallus gallus (Chicken).